The chain runs to 354 residues: Methylthioribose-1-phosphate isomerase (354 aa).

Substrate-binding positions include 49-51, Arg-92, and Gln-199; that span reads RGA. The active-site Proton donor is Asp-240. 250 to 251 is a substrate binding site; the sequence is NK.

Belongs to the eIF-2B alpha/beta/delta subunits family. MtnA subfamily.

It carries out the reaction 5-(methylsulfanyl)-alpha-D-ribose 1-phosphate = 5-(methylsulfanyl)-D-ribulose 1-phosphate. It functions in the pathway amino-acid biosynthesis; L-methionine biosynthesis via salvage pathway; L-methionine from S-methyl-5-thio-alpha-D-ribose 1-phosphate: step 1/6. Catalyzes the interconversion of methylthioribose-1-phosphate (MTR-1-P) into methylthioribulose-1-phosphate (MTRu-1-P). This Koribacter versatilis (strain Ellin345) protein is Methylthioribose-1-phosphate isomerase.